The following is a 374-amino-acid chain: Eukaryotic translation initiation factor 3 subunit M (374 aa).

N-acetylserine is present on serine 2. Residues serine 2 and serine 152 each carry the phosphoserine modification. One can recognise a PCI domain in the interval 180–339 (AASKVMVELL…RKVVVSHSTH (160 aa)). Lysine 254 carries the post-translational modification N6-acetyllysine. Serine 367 is subject to Phosphoserine.

The protein belongs to the eIF-3 subunit M family. In terms of assembly, component of the eukaryotic translation initiation factor 3 (eIF-3) complex, which is composed of 13 subunits: EIF3A, EIF3B, EIF3C, EIF3D, EIF3E, EIF3F, EIF3G, EIF3H, EIF3I, EIF3J, EIF3K, EIF3L and EIF3M. The eIF-3 complex appears to include 3 stable modules: module A is composed of EIF3A, EIF3B, EIF3G and EIF3I; module B is composed of EIF3F, EIF3H, and EIF3M; and module C is composed of EIF3C, EIF3D, EIF3E, EIF3K and EIF3L. EIF3C of module C binds EIF3B of module A and EIF3H of module B, thereby linking the three modules. EIF3J is a labile subunit that binds to the eIF-3 complex via EIF3B. The eIF-3 complex interacts with RPS6KB1 under conditions of nutrient depletion. Mitogenic stimulation leads to binding and activation of a complex composed of MTOR and RPTOR, leading to phosphorylation and release of RPS6KB1 and binding of EIF4B to eIF-3.

Its subcellular location is the cytoplasm. Component of the eukaryotic translation initiation factor 3 (eIF-3) complex, which is required for several steps in the initiation of protein synthesis. The eIF-3 complex associates with the 40S ribosome and facilitates the recruitment of eIF-1, eIF-1A, eIF-2:GTP:methionyl-tRNAi and eIF-5 to form the 43S pre-initiation complex (43S PIC). The eIF-3 complex stimulates mRNA recruitment to the 43S PIC and scanning of the mRNA for AUG recognition. The eIF-3 complex is also required for disassembly and recycling of post-termination ribosomal complexes and subsequently prevents premature joining of the 40S and 60S ribosomal subunits prior to initiation. The eIF-3 complex specifically targets and initiates translation of a subset of mRNAs involved in cell proliferation, including cell cycling, differentiation and apoptosis, and uses different modes of RNA stem-loop binding to exert either translational activation or repression. The sequence is that of Eukaryotic translation initiation factor 3 subunit M from Pongo abelii (Sumatran orangutan).